The primary structure comprises 180 residues: DNA-directed RNA polymerase subunit Rpo7 (180 aa).

One can recognise an S1 motif domain in the interval 82-165; the sequence is QEVVEGEVLQ…RLPRIALTMR (84 aa).

It belongs to the eukaryotic RPB7/RPC8 RNA polymerase subunit family. In terms of assembly, part of the 13-subunit RNA polymerase complex. Forms a stalk with Rpo4 that extends from the main structure.

The protein localises to the cytoplasm. It catalyses the reaction RNA(n) + a ribonucleoside 5'-triphosphate = RNA(n+1) + diphosphate. DNA-dependent RNA polymerase (RNAP) catalyzes the transcription of DNA into RNA using the four ribonucleoside triphosphates as substrates. The highly mobile Rpo4/Rpo7 heterodimer is conditionally required for transcription initiation. The sequence is that of DNA-directed RNA polymerase subunit Rpo7 from Saccharolobus shibatae (strain ATCC 51178 / DSM 5389 / JCM 8931 / NBRC 15437 / B12) (Sulfolobus shibatae).